The chain runs to 192 residues: UPF0301 protein Bcep18194_A3962 (192 aa).

This sequence belongs to the UPF0301 (AlgH) family.

The polypeptide is UPF0301 protein Bcep18194_A3962 (Burkholderia lata (strain ATCC 17760 / DSM 23089 / LMG 22485 / NCIMB 9086 / R18194 / 383)).